A 1233-amino-acid chain; its full sequence is Glutamate receptor ionotropic, NMDA 2C (1233 aa).

The N-terminal stretch at 1-19 (MGGALGPALLLTSLFGAWA) is a signal peptide. At 20 to 554 (GLGPGQGEQG…SAFLEPYSPA (535 aa)) the chain is on the extracellular side. N-linked (GlcNAc...) asparagine glycans are attached at residues N70 and N73. C82 and C317 are oxidised to a cystine. N337 and N438 each carry an N-linked (GlcNAc...) asparagine glycan. Cystine bridges form between C426–C453 and C433–C454. The L-glutamate site is built by S509, T511, and R516. N539 carries N-linked (GlcNAc...) asparagine glycosylation. Residues 555 to 575 (VWVMMFVMCLTVVAITVFMFE) form a helical membrane-spanning segment. The Cytoplasmic segment spans residues 576 to 598 (YFSPVSYNQNLTRGKKSGGPAFT). Residues 599 to 611 (IGKSVWLLWALVF) constitute an intramembrane region (discontinuously helical). The segment at 601–620 (KSVWLLWALVFNNSVPIENP) is pore-forming. Residues 612-626 (NNSVPIENPRGTTSK) lie on the Cytoplasmic side of the membrane. A helical membrane pass occupies residues 627–644 (IMVLVWAFFAVIFLASYT). The Extracellular segment spans residues 645-813 (ANLAAFMIQE…EVMSSKLDID (169 aa)). N685 carries N-linked (GlcNAc...) asparagine glycosylation. L-glutamate-binding residues include S687, T688, and D729. A disulfide bridge connects residues C743 and C798. Residues 814–836 (NMAGVFYMLLVAMGLALLVFAWE) traverse the membrane as a helical segment. At 837–1233 (HLVYWKLRHS…RRISSLESEV (397 aa)) the chain is on the cytoplasmic side. Phosphoserine is present on residues S875, S881, and S912. The interval 920–994 (IENWGGGRRA…GPPLSDVSRV (75 aa)) is disordered. 2 stretches are compositionally biased toward pro residues: residues 929 to 956 (APPPSPCPTPRSGPSPCLPTPDPPPEPS) and 975 to 987 (PQPPGRPPTPGPP). The PDZ-binding motif lies at 1231–1233 (SEV).

This sequence belongs to the glutamate-gated ion channel (TC 1.A.10.1) family. NR2C/GRIN2C subfamily. In terms of assembly, heterotetramer. Forms heterotetrameric channels composed of two GluN1/zeta subunits (GRIN1), and two identical GluN2/epsilon subunits (GRIN2A, GRIN2B, GRIN2C or GRIN2D) or GluN3 subunits (GRIN3A or GRIN3B) (in vitro). In vivo, the subunit composition may depend on the expression levels of the different subunits. Interacts with PDZ domains of PATJ and DLG4. Interacts (via PDZ-binding motif) with SNX27 (via PDZ domain); the interaction is required for recycling to the plasma membrane when endocytosed and prevent degradation in lysosomes. In terms of tissue distribution, mainly expressed in brain with predominant expression is in the cerebellum, also present in the hippocampus, amygdala, caudate nucleus, corpus callosum, subthalamic nuclei and thalamus. Detected in the heart, skeletal muscle and pancreas.

It localises to the cell membrane. The protein localises to the postsynaptic cell membrane. The catalysed reaction is Ca(2+)(in) = Ca(2+)(out). It catalyses the reaction Na(+)(in) = Na(+)(out). It carries out the reaction K(+)(in) = K(+)(out). Component of N-methyl-D-aspartate (NMDA) receptors (NMDARs) that function as heterotetrameric, ligand-gated cation channels with high calcium permeability and voltage-dependent block by Mg(2+). Participates in synaptic plasticity for learning and memory formation by contributing to the slow phase of excitatory postsynaptic current and long-term synaptic potentiation. Channel activation requires binding of the neurotransmitter L-glutamate to the GluN2 subunit, glycine or D-serine binding to the GluN1 subunit, plus membrane depolarization to eliminate channel inhibition by Mg(2+). NMDARs mediate simultaneously the potasium efflux and the influx of calcium and sodium. Each GluN2 subunit confers differential attributes to channel properties, including activation, deactivation and desensitization kinetics, pH sensitivity, Ca2(+) permeability, and binding to allosteric modulators. This chain is Glutamate receptor ionotropic, NMDA 2C, found in Homo sapiens (Human).